Here is a 350-residue protein sequence, read N- to C-terminus: Anthranilate phosphoribosyltransferase (350 aa).

5-phospho-alpha-D-ribose 1-diphosphate-binding positions include glycine 82, 85 to 86 (GD), serine 90, 92 to 95 (NVST), 110 to 118 (KHGNRAVTG), and glycine 122. Anthranilate is bound at residue glycine 82. Serine 94 provides a ligand contact to Mg(2+). Asparagine 113 contributes to the anthranilate binding site. Position 168 (arginine 168) interacts with anthranilate. Positions 232 and 233 each coordinate Mg(2+).

The protein belongs to the anthranilate phosphoribosyltransferase family. Homodimer. The cofactor is Mg(2+).

It catalyses the reaction N-(5-phospho-beta-D-ribosyl)anthranilate + diphosphate = 5-phospho-alpha-D-ribose 1-diphosphate + anthranilate. It functions in the pathway amino-acid biosynthesis; L-tryptophan biosynthesis; L-tryptophan from chorismate: step 2/5. Its function is as follows. Catalyzes the transfer of the phosphoribosyl group of 5-phosphorylribose-1-pyrophosphate (PRPP) to anthranilate to yield N-(5'-phosphoribosyl)-anthranilate (PRA). The sequence is that of Anthranilate phosphoribosyltransferase from Methanothermobacter marburgensis (strain ATCC BAA-927 / DSM 2133 / JCM 14651 / NBRC 100331 / OCM 82 / Marburg) (Methanobacterium thermoautotrophicum).